We begin with the raw amino-acid sequence, 129 residues long: Transcription antitermination protein NusB (129 aa).

The protein belongs to the NusB family.

Involved in transcription antitermination. Required for transcription of ribosomal RNA (rRNA) genes. Binds specifically to the boxA antiterminator sequence of the ribosomal RNA (rrn) operons. This Staphylococcus aureus (strain USA300 / TCH1516) protein is Transcription antitermination protein NusB.